Consider the following 359-residue polypeptide: Phosphate acyltransferase (359 aa).

This sequence belongs to the PlsX family. Homodimer. Probably interacts with PlsY.

It localises to the cytoplasm. It carries out the reaction a fatty acyl-[ACP] + phosphate = an acyl phosphate + holo-[ACP]. The protein operates within lipid metabolism; phospholipid metabolism. Its function is as follows. Catalyzes the reversible formation of acyl-phosphate (acyl-PO(4)) from acyl-[acyl-carrier-protein] (acyl-ACP). This enzyme utilizes acyl-ACP as fatty acyl donor, but not acyl-CoA. The polypeptide is Phosphate acyltransferase (Salmonella heidelberg (strain SL476)).